A 296-amino-acid chain; its full sequence is GTPase Era (296 aa).

The Era-type G domain occupies 7 to 174 (HCGFVAIVGR…LDQVRPHLPE (168 aa)). The interval 15–22 (GRPNVGKS) is G1. Residue 15–22 (GRPNVGKS) coordinates GTP. Residues 41 to 45 (QTTRH) form a G2 region. Positions 62–65 (DTPG) are G3. GTP contacts are provided by residues 62–66 (DTPGF) and 123–126 (NKLD). The interval 123–126 (NKLD) is G4. Residues 153-155 (VSA) form a G5 region. Residues 205 to 281 (LGEELPYEMN…FLQVWVKVKS (77 aa)) form the KH type-2 domain.

The protein belongs to the TRAFAC class TrmE-Era-EngA-EngB-Septin-like GTPase superfamily. Era GTPase family. In terms of assembly, monomer.

It is found in the cytoplasm. It localises to the cell inner membrane. In terms of biological role, an essential GTPase that binds both GDP and GTP, with rapid nucleotide exchange. Plays a role in 16S rRNA processing and 30S ribosomal subunit biogenesis and possibly also in cell cycle regulation and energy metabolism. This Chromobacterium violaceum (strain ATCC 12472 / DSM 30191 / JCM 1249 / CCUG 213 / NBRC 12614 / NCIMB 9131 / NCTC 9757 / MK) protein is GTPase Era.